Reading from the N-terminus, the 218-residue chain is Putative glutamine transport system permease protein GlnP (218 aa).

An ABC transmembrane type-1 domain is found at 19-208; that stretch reads TLVTLKYSII…ILVMLISFIA (190 aa). The next 4 helical transmembrane spans lie at 25 to 45, 57 to 79, 86 to 108, and 187 to 207; these read YSIIAVILGLVIGMLLAICKV, FYTSIFRGTPLLVQLSIIYFAAP, FSVFMAGVISFALNSGAYVSEVI, and FFPMLIAACCYYILVMLISFI.

Belongs to the binding-protein-dependent transport system permease family. HisMQ subfamily.

The protein localises to the cell inner membrane. Part of the binding-protein-dependent transport system for glutamine; probably responsible for the translocation of the substrate across the membrane. The polypeptide is Putative glutamine transport system permease protein GlnP (glnP) (Rickettsia typhi (strain ATCC VR-144 / Wilmington)).